The chain runs to 270 residues: Phosphonates import ATP-binding protein PhnC 2 (270 aa).

The ABC transporter domain occupies 2-245; it reads LVVEGLTCRF…IARELYDLEA (244 aa). 34–41 serves as a coordination point for ATP; the sequence is GRSGAGKS.

Belongs to the ABC transporter superfamily. Phosphonates importer (TC 3.A.1.9.1) family. In terms of assembly, the complex is composed of two ATP-binding proteins (PhnC), two transmembrane proteins (PhnE) and a solute-binding protein (PhnD).

The protein resides in the cell inner membrane. The enzyme catalyses phosphonate(out) + ATP + H2O = phosphonate(in) + ADP + phosphate + H(+). In terms of biological role, part of the ABC transporter complex PhnCDE involved in phosphonates import. Responsible for energy coupling to the transport system. The sequence is that of Phosphonates import ATP-binding protein PhnC 2 from Rhodopseudomonas palustris (strain BisA53).